The primary structure comprises 257 residues: E3 ubiquitin-protein ligase RNF170 (257 aa).

Residues 1–24 (MADNQEGRPYFPLDEGSIIEGVSD) lie on the Lumenal side of the membrane. The helical transmembrane segment at 25-45 (QVIVVVLLSFVAVGSLLYLLL) threads the bilayer. Topologically, residues 46–200 (RNDEQNIHPE…GGLFWMFRIR (155 aa)) are cytoplasmic. The RING-type zinc finger occupies 87 to 130 (CPVCLQQATFPVETNCGHLFCGSCIIAYWRYGSWLGAINCPICR). Residues 201–221 (IVLCLLGALFYLVSPLDIIPE) form a helical membrane-spanning segment. Position 222 (Ala-222) is a topological domain, lumenal. The chain crosses the membrane as a helical span at residues 223–243 (VFGLLGFLDDFFVLFLLLIYI). The Cytoplasmic portion of the chain corresponds to 244–257 (SIMYREVVTQRLYR).

The protein localises to the endoplasmic reticulum membrane. The catalysed reaction is S-ubiquitinyl-[E2 ubiquitin-conjugating enzyme]-L-cysteine + [acceptor protein]-L-lysine = [E2 ubiquitin-conjugating enzyme]-L-cysteine + N(6)-ubiquitinyl-[acceptor protein]-L-lysine.. It participates in protein modification; protein ubiquitination. In terms of biological role, E3 ubiquitin-protein ligase that plays an essential role in stimulus-induced inositol 1,4,5-trisphosphate receptor (ITPR) ubiquitination and degradation via the endoplasmic reticulum-associated degradation (ERAD) pathway. Also involved in ITPR turnover in resting cells. This Xenopus tropicalis (Western clawed frog) protein is E3 ubiquitin-protein ligase RNF170 (rnf170).